Here is a 394-residue protein sequence, read N- to C-terminus: Elongation factor Tu (394 aa).

The 195-residue stretch at 10 to 204 (KPHVNVGTIG…HLDSYIPEPE (195 aa)) folds into the tr-type G domain. Residues 19 to 26 (GHVDHGKT) form a G1 region. 19-26 (GHVDHGKT) is a GTP binding site. T26 is a Mg(2+) binding site. The segment at 60–64 (GITIN) is G2. Residues 81 to 84 (DCPG) form a G3 region. GTP-binding positions include 81–85 (DCPGH) and 136–139 (NKCD). The G4 stretch occupies residues 136–139 (NKCD). The tract at residues 174-176 (SAL) is G5.

Belongs to the TRAFAC class translation factor GTPase superfamily. Classic translation factor GTPase family. EF-Tu/EF-1A subfamily. In terms of assembly, monomer.

It is found in the cytoplasm. The enzyme catalyses GTP + H2O = GDP + phosphate + H(+). GTP hydrolase that promotes the GTP-dependent binding of aminoacyl-tRNA to the A-site of ribosomes during protein biosynthesis. The chain is Elongation factor Tu from Haemophilus ducreyi (strain 35000HP / ATCC 700724).